An 863-amino-acid chain; its full sequence is Glycogen phosphorylase (863 aa).

The residue at position 618 (Lys618) is an N6-(pyridoxal phosphate)lysine.

This sequence belongs to the glycogen phosphorylase family. Requires pyridoxal 5'-phosphate as cofactor.

It carries out the reaction [(1-&gt;4)-alpha-D-glucosyl](n) + phosphate = [(1-&gt;4)-alpha-D-glucosyl](n-1) + alpha-D-glucose 1-phosphate. In terms of biological role, phosphorylase is an important allosteric enzyme in carbohydrate metabolism. Enzymes from different sources differ in their regulatory mechanisms and in their natural substrates. However, all known phosphorylases share catalytic and structural properties. The chain is Glycogen phosphorylase (glgP) from Mycobacterium tuberculosis (strain ATCC 25618 / H37Rv).